Here is a 645-residue protein sequence, read N- to C-terminus: Matrix metalloproteinase-24 (645 aa).

Low complexity predominate over residues 1-10; it reads MPRSRGGRAA. The tract at residues 1–26 is disordered; sequence MPRSRGGRAAPGPPPPPPPPGQAPRW. The N-terminal stretch at 1 to 52 is a signal peptide; sequence MPRSRGGRAAPGPPPPPPPPGQAPRWSRWRVPGRLLLLLLPALCCLPGAARA. The segment covering 11 to 22 has biased composition (pro residues); sequence PGPPPPPPPPGQ. A propeptide spanning residues 53-155 is cleaved from the precursor; the sequence is AAAAAGAGNR…HLSRRRRNKR (103 aa). The Extracellular portion of the chain corresponds to 53–602; that stretch reads AAAAAGAGNR…INDVPGSVNA (550 aa). Residues 137–144 carry the Cysteine switch motif; sequence PRCGVPDH. Zn(2+)-binding residues include Cys-139 and His-282. The active site involves Glu-283. 2 residues coordinate Zn(2+): His-286 and His-292. Positions 323–380 are disordered; it reads QKIYGPPAEPLEPTRPLPTLPVRRIHSPSERKHERQPRPPRPPLGDRPSTPGTKPNIC. Pro residues predominate over residues 329–341; the sequence is PAEPLEPTRPLPT. Basic and acidic residues predominate over residues 349 to 359; sequence SPSERKHERQP. 4 Hemopexin repeats span residues 377 to 425, 426 to 471, 473 to 521, and 522 to 569; these read PNIC…WKGL, PARI…GSCL, REGI…KGIP, and QAPQ…WMGC. A disulfide bridge connects residues Cys-380 and Cys-569. Residues 603–623 form a helical membrane-spanning segment; that stretch reads VAVVIPCILSLCILVLVYTIF. Over 624–645 the chain is Cytoplasmic; the sequence is QFKNKTGPQPVTYYKRPVQEWV. The PDZ-binding signature appears at 643-645; that stretch reads EWV.

The protein belongs to the peptidase M10A family. As to quaternary structure, interacts (via PDZ-binding motif) with APBA3 (via PDZ domain). Interacts with GRIP1 and GRIP2. Zn(2+) serves as cofactor. The cofactor is Ca(2+). Cleaved by a furin endopeptidase in the trans-Golgi network. As to expression, predominantly expressed in brain, kidney, pancreas and lung. Overexpressed in a series of brain tumors, including astrocytomas and glioblastomas.

Its subcellular location is the cell membrane. The protein resides in the golgi apparatus. It localises to the trans-Golgi network membrane. It is found in the secreted. The protein localises to the extracellular space. Its subcellular location is the extracellular matrix. Functionally, metalloprotease that mediates cleavage of N-cadherin (CDH2) and acts as a regulator of neuro-immune interactions and neural stem cell quiescence. Involved in cell-cell interactions between nociceptive neurites and mast cells, possibly by mediating cleavage of CDH2, thereby acting as a mediator of peripheral thermal nociception and inflammatory hyperalgesia. Key regulator of neural stem cells quiescence by mediating cleavage of CDH2, affecting CDH2-mediated anchorage of neural stem cells to ependymocytes in the adult subependymal zone, leading to modulate their quiescence. May play a role in axonal growth. Able to activate progelatinase A. May also be a proteoglycanase involved in degradation of proteoglycans, such as dermatan sulfate and chondroitin sulfate proteoglycans. Cleaves partially fibronectin, but not collagen type I, nor laminin. The protein is Matrix metalloproteinase-24 (MMP24) of Homo sapiens (Human).